A 352-amino-acid polypeptide reads, in one-letter code: Leukotriene B4 receptor 1 (352 aa).

Topologically, residues 1-19 (MNTTSSAAPPSLGVEFISL) are extracellular. Residue N2 is glycosylated (N-linked (GlcNAc...) asparagine). Residues 20–42 (LAIILLSVALAVGLPGNSFVVWS) traverse the membrane as a helical segment. Residues 43–54 (ILKRMQKRSVTA) lie on the Cytoplasmic side of the membrane. The helical transmembrane segment at 55-75 (LMVLNLALADLAVLLTAPFFL) threads the bilayer. At 76–91 (HFLAQGTWSFGLAGCR) the chain is on the extracellular side. A helical membrane pass occupies residues 92 to 113 (LCHYVCGVSMYASVLLITAMSL). Over 114-138 (DRSLAVARPFVSQKLRTKAMARRVL) the chain is Cytoplasmic. Residues 139 to 159 (AGIWVLSFLLATPVLAYRTVV) traverse the membrane as a helical segment. Residues 160-178 (PWKTNMSLCFPRYPSEGHR) lie on the Extracellular side of the membrane. N164 is a glycosylation site (N-linked (GlcNAc...) asparagine). Residues 179–199 (AFHLIFEAVTGFLLPFLAVVA) traverse the membrane as a helical segment. The Cytoplasmic portion of the chain corresponds to 200–221 (SYSDIGRRLQARRFRRSRRTGR). The chain crosses the membrane as a helical span at residues 222–242 (LVVLIILTFAAFWLPYHVVNL). Over 243-268 (AEAGRALAGQAAGLGLVGKRLSLARN) the chain is Extracellular. The helical transmembrane segment at 269 to 289 (VLIALAFLSSSVNPVLYACAG) threads the bilayer. At 290–352 (GGLLRSAGVG…SSPLKLNELN (63 aa)) the chain is on the cytoplasmic side. 2 stretches are compositionally biased toward polar residues: residues 310-326 (SEAS…QTAR) and 338-352 (ESLT…NELN). Positions 310 to 352 (SEASSTRRGGSLGQTARSGPAALEPGPSESLTASSPLKLNELN) are disordered.

The protein belongs to the G-protein coupled receptor 1 family. In terms of processing, phosphorylated by GRK6 upon leukotriene B4 binding; which promotes desensitization. In terms of tissue distribution, expressed at highest levels in heart, skeletal muscle and at lower levels in brain and liver. High level of expression in lymphoid tissues.

The protein localises to the cell membrane. Receptor for extracellular ATP &gt; UTP and ADP. The activity of this receptor is mediated by G proteins which activate a phosphatidylinositol-calcium second messenger system. May be the cardiac P2Y receptor involved in the regulation of cardiac muscle contraction through modulation of L-type calcium currents. Is a receptor for leukotriene B4, a potent chemoattractant involved in inflammation and immune response. The sequence is that of Leukotriene B4 receptor 1 (LTB4R) from Homo sapiens (Human).